The sequence spans 183 residues: MSKMAQVNGDLPAVNSATAQHLLDIPVIHDGVVAFRNNPLGKKSIAIGDSAYQTFAAPLLPYLARPWGYLRPYAEKADALGDQTLTKVEERVPVIKKPTEELYAGAKGIIALPIRTGFEAKDHVFKTYAQEKKKVGGENLVTYGKAIVSTTLITTSEIIIWVGDVMHYKKEEAKDIVNEKVNN.

The protein belongs to the perilipin family.

Its subcellular location is the lipid droplet. Functionally, lipid droplet coating protein that regulates lipid metabolism, appressorial turgor pressure, and virulence. Appressorial turgor pressure is important for the mechanical penetration of the host cuticle during infection. This Colletotrichum gloeosporioides (Anthracnose fungus) protein is Lipid droplet coating protein Cap20 (Cap20).